The sequence spans 381 residues: Cytochrome b (381 aa).

4 helical membrane passes run 34 to 54 (FGSL…FLAM), 78 to 99 (WLIR…YLHI), 114 to 134 (WNIG…GYVL), and 179 to 199 (FFAF…IHLL). Heme b-binding residues include His-84 and His-98. The heme b site is built by His-183 and His-197. His-202 contributes to the a ubiquinone binding site. 4 helical membrane-spanning segments follow: residues 227–247 (YKDL…ALFM), 289–309 (LGGV…PLLH), 321–341 (LTQI…WIGG), and 348–368 (FITV…IIMP).

This sequence belongs to the cytochrome b family. In terms of assembly, the cytochrome bc1 complex contains 3 respiratory subunits (MT-CYB, CYC1 and UQCRFS1), 2 core proteins (UQCRC1 and UQCRC2) and probably 6 low-molecular weight proteins. The cofactor is heme b.

The protein resides in the mitochondrion inner membrane. Its function is as follows. Component of the ubiquinol-cytochrome c reductase complex (complex III or cytochrome b-c1 complex) that is part of the mitochondrial respiratory chain. The b-c1 complex mediates electron transfer from ubiquinol to cytochrome c. Contributes to the generation of a proton gradient across the mitochondrial membrane that is then used for ATP synthesis. In Sphyrna lewini (Scalloped hammerhead shark), this protein is Cytochrome b (mt-cyb).